We begin with the raw amino-acid sequence, 905 residues long: Cadherin-2B (905 aa).

A signal peptide spans 1–28 (MCRKQPFLLPTLLGILAALMLQQGPVEA). Residues 29–160 (FGGSRLCKTG…NSNGLQRQKR (132 aa)) constitute a propeptide that is removed on maturation. 5 Cadherin domains span residues 161 to 268 (DWVI…RPEF), 269 to 383 (LHQI…PPEF), 384 to 498 (TAMT…NPYF), 499 to 604 (TPNP…DNAP), and 605 to 713 (YVYP…TTAP). Over 161–723 (DWVIPPINVP…IIGTGLGTGA (563 aa)) the chain is Extracellular. Residue Glu171 coordinates Ca(2+). Asn191 carries N-linked (GlcNAc...) asparagine glycosylation. Residues Asp227, Glu229, Asp260, Met261, Asn262, Asp263, and Asn264 each coordinate Ca(2+). N-linked (GlcNAc...) asparagine glycosylation occurs at Asn274. Residues Asp294, Asp296, and Asn302 each contribute to the Ca(2+) site. N-linked (GlcNAc...) asparagine glycosylation occurs at Asn326. Position 354 (Asp354) interacts with Ca(2+). Asn403, Asn573, Asn623, Asn651, and Asn692 each carry an N-linked (GlcNAc...) asparagine glycan. Residues 724–745 (IIAILLCIIILLTLVLMFVVWM) traverse the membrane as a helical segment. Residues 746–905 (KRRDKERQAK…LADMYGGSDD (160 aa)) lie on the Cytoplasmic side of the membrane. 2 disordered regions span residues 774–800 (EEGG…PDTI) and 862–883 (SGST…EQDY). The segment covering 775–784 (EGGGEEDQDY) has biased composition (acidic residues). Positions 862–879 (SGSTAGSLSSLNSSSSGG) are enriched in low complexity.

Homodimer (via extracellular region). Can also form heterodimers with other cadherins (via extracellular region). Dimerization occurs in trans, i.e. with a cadherin chain from another cell.

Its subcellular location is the cell membrane. It localises to the sarcolemma. It is found in the cell junction. The protein localises to the cell surface. The protein resides in the desmosome. Its subcellular location is the adherens junction. In terms of biological role, calcium-dependent cell adhesion protein; preferentially mediates homotypic cell-cell adhesion. Cadherins may thus contribute to the sorting of heterogeneous cell types, and thereby play an important role during embryonic development. Required for proper neurite branching. Required for pre- and postsynaptic organization. The sequence is that of Cadherin-2B (cdh2-b) from Xenopus laevis (African clawed frog).